Consider the following 310-residue polypeptide: Cytochrome P450 monooxygenase ppzG (310 aa).

Residue Cys288 participates in heme binding.

This sequence belongs to the cytochrome P450 family. Requires heme as cofactor.

It participates in secondary metabolite biosynthesis. Its function is as follows. Cytochrome P450 monooxygenase; part of the gene cluster that mediates the biosynthesis of pyrrolopyrazines, secondary metabolites showing insecticidal activity. The role of ppzG within the pathway has still to be determined. The single multifunctional NRPS ppzA is sufficient to produce peramine via condensation of 1-pyrroline-5-carboxylate and arginine, N-methylation of the alpha-amino group of arginine and reduction of the thioester and the cyclization to form an iminium ion resulting in release from the peptide synthetase. Deprotonation of this intermediate and oxidation of the pyrroline ring would give rise to peramine. In Epichloe species that produce only peramine, the peramine synthetase gene is not localized in a gene cluster, in contrast to Metarhizium species that contain additional pyrrolopyrazine biosynthesis genes. The 2-oxoglutarate-Fe(II) type oxidoreductase ppzC hydroxylates peramine to yield the newly identified compound 8-hydroxyperamine whereas ppzD converts L-proline into trans-4-hydroxy-L-proline, a precursor of peramine biosynthesis. In Metarhizium majus (strain ARSEF 297), this protein is Cytochrome P450 monooxygenase ppzG (ppzG).